We begin with the raw amino-acid sequence, 230 residues long: N-(5'-phosphoribosyl)anthranilate isomerase (230 aa).

It belongs to the TrpF family.

It catalyses the reaction N-(5-phospho-beta-D-ribosyl)anthranilate = 1-(2-carboxyphenylamino)-1-deoxy-D-ribulose 5-phosphate. The protein operates within amino-acid biosynthesis; L-tryptophan biosynthesis; L-tryptophan from chorismate: step 3/5. In Trichodesmium erythraeum (strain IMS101), this protein is N-(5'-phosphoribosyl)anthranilate isomerase.